A 205-amino-acid chain; its full sequence is Small ribosomal subunit protein uS4 (205 aa).

The segment at 17–46 (ENIWGRPKSPVNKREYGPGQHGQRRKGKLS) is disordered. Residues 94–157 (SRLDAVVYRA…KQLVIVLESV (64 aa)) enclose the S4 RNA-binding domain.

It belongs to the universal ribosomal protein uS4 family. Part of the 30S ribosomal subunit. Contacts protein S5. The interaction surface between S4 and S5 is involved in control of translational fidelity.

One of the primary rRNA binding proteins, it binds directly to 16S rRNA where it nucleates assembly of the body of the 30S subunit. In terms of biological role, with S5 and S12 plays an important role in translational accuracy. This Mesorhizobium japonicum (strain LMG 29417 / CECT 9101 / MAFF 303099) (Mesorhizobium loti (strain MAFF 303099)) protein is Small ribosomal subunit protein uS4.